The primary structure comprises 348 residues: Glucokinase (348 aa).

14 to 19 (GDVGGS) is a binding site for ATP. The disordered stretch occupies residues 327-348 (SDPAPVAAPTHPRGGTAGDMHA).

The protein belongs to the bacterial glucokinase family.

It is found in the cytoplasm. It carries out the reaction D-glucose + ATP = D-glucose 6-phosphate + ADP + H(+). This chain is Glucokinase, found in Chromobacterium violaceum (strain ATCC 12472 / DSM 30191 / JCM 1249 / CCUG 213 / NBRC 12614 / NCIMB 9131 / NCTC 9757 / MK).